Consider the following 210-residue polypeptide: Imidazoleglycerol-phosphate dehydratase (210 aa).

The protein belongs to the imidazoleglycerol-phosphate dehydratase family.

It carries out the reaction D-erythro-1-(imidazol-4-yl)glycerol 3-phosphate = 3-(imidazol-4-yl)-2-oxopropyl phosphate + H2O. It functions in the pathway amino-acid biosynthesis; L-histidine biosynthesis; L-histidine from 5-phospho-alpha-D-ribose 1-diphosphate: step 6/9. This Candida glabrata (strain ATCC 2001 / BCRC 20586 / JCM 3761 / NBRC 0622 / NRRL Y-65 / CBS 138) (Yeast) protein is Imidazoleglycerol-phosphate dehydratase (HIS3).